The chain runs to 698 residues: Transferrin-binding protein B (698 aa).

Positions 1 to 20 are cleaved as a signal peptide; the sequence is MNNPLVNQAAMVLPVFLLSA. The N-palmitoyl cysteine moiety is linked to residue Cys21. A lipid anchor (S-diacylglycerol cysteine) is attached at Cys21. Disordered regions lie at residues 33-58, 83-102, 294-324, 349-383, 428-479, and 669-698; these read VDTE…QKDQ, IKLS…KNPS, FSGK…SLSG, GSAK…SENS, ESGK…GDAN, and TKNA…KPVQ. Residues 46–56 show a composition bias toward polar residues; sequence DVSSEKPQAQK. Positions 299–315 are enriched in basic and acidic residues; it reads EATDKPKNDGETKEHPF. The segment covering 369 to 383 has biased composition (low complexity); sequence AAASNGAAGTSSENS. A compositionally biased stretch (polar residues) spans 460 to 476; that stretch reads QAGTAENGNPAASNTAG. Residues 671-686 are compositionally biased toward low complexity; that stretch reads NATDASGNGNSASSAT.

This sequence belongs to the TbpB family. As to quaternary structure, binds only human holo-transferrin (TF), via the TF C-terminus. Forms a large complex with TbpA and TF. Interacts via its C-terminal domain with Slam1.

The protein localises to the cell outer membrane. Its subcellular location is the cell surface. In terms of biological role, neisseria acquires iron by extracting it from serum transferrin (TF) in its human host. Acts as a TF receptor and is required for TF utilization. Involved in the initial capture of TF. Helps select only those TF molecules that can be used as an iron source and concentrates them on the cell surface, maintaining the iron-loaded status of the TF C-terminal lobe until its delivery to TbpA. The protein is Transferrin-binding protein B of Neisseria meningitidis serogroup A / serotype 4A (strain DSM 15465 / Z2491).